The following is a 98-amino-acid chain: Large ribosomal subunit protein uL23 (98 aa).

The protein belongs to the universal ribosomal protein uL23 family. In terms of assembly, part of the 50S ribosomal subunit. Contacts protein L29, and trigger factor when it is bound to the ribosome.

Its function is as follows. One of the early assembly proteins it binds 23S rRNA. One of the proteins that surrounds the polypeptide exit tunnel on the outside of the ribosome. Forms the main docking site for trigger factor binding to the ribosome. This chain is Large ribosomal subunit protein uL23, found in Dinoroseobacter shibae (strain DSM 16493 / NCIMB 14021 / DFL 12).